The chain runs to 278 residues: Pre-hexon-linking protein VIII (278 aa).

Positions serine 114–glutamine 199 are excised as a propeptide.

It belongs to the adenoviridae hexon-linking protein family. Interacts with the peripentonal hexons as well as the hexons in the facets. Part of a complex composed of the core-capsid bridging protein, the endosome lysis protein VI and the hexon-linking protein VIII; these interactions bridge the virus core to the capsid. Post-translationally, cleaved by the viral protease during virion maturation. May cause the middle segment to be shed from the capsid.

The protein resides in the virion. Its subcellular location is the host nucleus. Functionally, structural component of the virion that acts as a cement protein on the capsid interior and which glue the peripentonal hexons and group-of-nine hexons together. This Pantherophis guttatus (Corn snake) protein is Pre-hexon-linking protein VIII.